Here is a 340-residue protein sequence, read N- to C-terminus: 4-amino-5-hydroxymethyl-2-methylpyrimidine phosphate synthase THI11 (340 aa).

An N6-(pyridoxal phosphate)lysine modification is found at Lys-62. The active site involves His-66. 115 to 118 is a pyridoxal 5'-phosphate binding site; sequence GEFG. Positions 195–199 match the CCCFC; essential for catalytic activity, may be the site of iron coordination motif; it reads CCCFC.

Belongs to the NMT1/THI5 family. As to quaternary structure, homodimer. The cofactor is Fe cation.

It catalyses the reaction N(6)-(pyridoxal phosphate)-L-lysyl-[4-amino-5-hydroxymethyl-2-methylpyrimidine phosphate synthase] + L-histidyl-[4-amino-5-hydroxymethyl-2-methylpyrimidine phosphate synthase] + 2 Fe(3+) + 4 H2O = L-lysyl-[4-amino-5-hydroxymethyl-2-methylpyrimidine phosphate synthase] + (2S)-2-amino-5-hydroxy-4-oxopentanoyl-[4-amino-5-hydroxymethyl-2-methylpyrimidine phosphate synthase] + 4-amino-2-methyl-5-(phosphooxymethyl)pyrimidine + 3-oxopropanoate + 2 Fe(2+) + 2 H(+). It participates in cofactor biosynthesis; thiamine diphosphate biosynthesis. Functionally, responsible for the formation of the pyrimidine heterocycle in the thiamine biosynthesis pathway. Catalyzes the formation of hydroxymethylpyrimidine phosphate (HMP-P) from histidine and pyridoxal phosphate (PLP). The protein uses PLP and the active site histidine to form HMP-P, generating an inactive enzyme. The enzyme can only undergo a single turnover, which suggests it is a suicide enzyme. The sequence is that of 4-amino-5-hydroxymethyl-2-methylpyrimidine phosphate synthase THI11 from Saccharomyces cerevisiae (strain ATCC 204508 / S288c) (Baker's yeast).